The sequence spans 462 residues: Zinc finger CCCH domain-containing protein 34 (462 aa).

Positions 1–13 (MERYGRPGEEGSR) are enriched in basic and acidic residues. The segment at 1–26 (MERYGRPGEEGSRSDPSLEWTSHGGE) is disordered. 3 C3H1-type zinc fingers span residues 54–82 (RPDE…HPRD), 100–128 (RMGH…HPRQ), and 148–176 (RPGE…HPVP). Positions 288–303 (TGTYQSVPSSNSTSKE) are enriched in polar residues. A disordered region spans residues 288 to 310 (TGTYQSVPSSNSTSKEFPQRPDQ). C3H1-type zinc fingers lie at residues 307–335 (RPDQ…HPVD) and 353–381 (RPGV…HSMS). A compositionally biased stretch (low complexity) spans 405–418 (SSSLSGSSAPVSSS). Residues 405 to 462 (SSSLSGSSAPVSSSNEPTKEAVTPAVSSMVSGLSRPEPAETSGDSASVSGSIEAKTSS) form a disordered region. A compositionally biased stretch (polar residues) spans 446–462 (SGDSASVSGSIEAKTSS).

It localises to the nucleus. The protein is Zinc finger CCCH domain-containing protein 34 of Arabidopsis thaliana (Mouse-ear cress).